The sequence spans 354 residues: DNA polymerase IV (354 aa).

A UmuC domain is found at 6 to 187 (IIHIDCDCFY…LPVTKLHGVG (182 aa)). Mg(2+) is bound by residues aspartate 10 and aspartate 105. Glutamate 106 is an active-site residue.

It belongs to the DNA polymerase type-Y family. In terms of assembly, monomer. Requires Mg(2+) as cofactor.

The protein resides in the cytoplasm. It carries out the reaction DNA(n) + a 2'-deoxyribonucleoside 5'-triphosphate = DNA(n+1) + diphosphate. Poorly processive, error-prone DNA polymerase involved in untargeted mutagenesis. Copies undamaged DNA at stalled replication forks, which arise in vivo from mismatched or misaligned primer ends. These misaligned primers can be extended by PolIV. Exhibits no 3'-5' exonuclease (proofreading) activity. May be involved in translesional synthesis, in conjunction with the beta clamp from PolIII. This Pseudomonas syringae pv. syringae (strain B728a) protein is DNA polymerase IV.